A 396-amino-acid polypeptide reads, in one-letter code: Lipid-A-disaccharide synthase (396 aa).

Belongs to the LpxB family.

The catalysed reaction is a lipid X + a UDP-2-N,3-O-bis[(3R)-3-hydroxyacyl]-alpha-D-glucosamine = a lipid A disaccharide + UDP + H(+). It functions in the pathway bacterial outer membrane biogenesis; LPS lipid A biosynthesis. Functionally, condensation of UDP-2,3-diacylglucosamine and 2,3-diacylglucosamine-1-phosphate to form lipid A disaccharide, a precursor of lipid A, a phosphorylated glycolipid that anchors the lipopolysaccharide to the outer membrane of the cell. This Nitrobacter winogradskyi (strain ATCC 25391 / DSM 10237 / CIP 104748 / NCIMB 11846 / Nb-255) protein is Lipid-A-disaccharide synthase.